Here is a 332-residue protein sequence, read N- to C-terminus: L-lactate dehydrogenase A chain (332 aa).

Residues 29–57 (GMVG…MEDK) and R99 contribute to the NAD(+) site. The substrate site is built by R106, N138, and R169. N138 provides a ligand contact to NAD(+). Catalysis depends on H193, which acts as the Proton acceptor. T248 provides a ligand contact to substrate.

It belongs to the LDH/MDH superfamily. LDH family. As to quaternary structure, homotetramer.

It localises to the cytoplasm. It catalyses the reaction (S)-lactate + NAD(+) = pyruvate + NADH + H(+). Its pathway is fermentation; pyruvate fermentation to lactate; (S)-lactate from pyruvate: step 1/1. Interconverts simultaneously and stereospecifically pyruvate and lactate with concomitant interconversion of NADH and NAD(+). In Rhinogobiops nicholsii (Blackeye goby), this protein is L-lactate dehydrogenase A chain (ldha).